The chain runs to 180 residues: Decaprenylphosphoryl-5-phosphoribose phosphatase (180 aa).

4 helical membrane-spanning segments follow: residues 31–51 (ALSHFGEHSAGWVALAAAGAL), 61–81 (LAVGAGAFLAHAAAVVIKRVV), 116–136 (VLLAQTTGVPAPALLVPPMAL), and 139–159 (LVLGVHYPTDVVTGVVVGALV).

It belongs to the PA-phosphatase related phosphoesterase family.

It is found in the cell membrane. The catalysed reaction is trans,octa-cis-decaprenylphospho-beta-D-ribofuranose 5-phosphate + H2O = trans,octa-cis-decaprenylphospho-beta-D-ribofuranose + phosphate. The protein operates within cell wall biogenesis; cell wall polysaccharide biosynthesis. Phosphatase involved in the biosynthesis of decaprenylphosphoryl arabinose (DPA), which serves as the arabinose donor for the biosynthesis of arabinogalactan, the major mycobacterial cell wall polysaccharide. Catalyzes the dephosphorylation of decaprenylphosphoryl-5-phosphoribose (DPPR) to decaprenyl-phosphoribose (DPR). This is Decaprenylphosphoryl-5-phosphoribose phosphatase from Mycolicibacterium smegmatis (strain ATCC 700084 / mc(2)155) (Mycobacterium smegmatis).